The chain runs to 135 residues: Small ribosomal subunit protein uS9 (135 aa).

It belongs to the universal ribosomal protein uS9 family.

This is Small ribosomal subunit protein uS9 from Petrotoga mobilis (strain DSM 10674 / SJ95).